Reading from the N-terminus, the 326-residue chain is Alkanal monooxygenase beta chain (326 aa).

Belongs to the bacterial luciferase oxidoreductase family. Heterodimer of an alpha and a beta chain.

The catalysed reaction is a long-chain fatty aldehyde + FMNH2 + O2 = a long-chain fatty acid + hnu + FMN + H2O + 2 H(+). Its function is as follows. Light-emitting reaction in luminous bacteria. The specific role of the beta subunit is unknown, but it is absolutely required for bioluminescence activity. The chain is Alkanal monooxygenase beta chain (luxB) from Aliivibrio fischeri (Vibrio fischeri).